We begin with the raw amino-acid sequence, 207 residues long: uncharacterized protein (207 aa).

Belongs to the IIV-6 350L family.

This is an uncharacterized protein from Invertebrate iridescent virus 6 (IIV-6).